A 419-amino-acid chain; its full sequence is Glucose-1-phosphate adenylyltransferase (419 aa).

Alpha-D-glucose 1-phosphate-binding positions include Tyr107, Gly172, 187 to 188 (EK), and Ser205.

The protein belongs to the bacterial/plant glucose-1-phosphate adenylyltransferase family. As to quaternary structure, homotetramer.

It catalyses the reaction alpha-D-glucose 1-phosphate + ATP + H(+) = ADP-alpha-D-glucose + diphosphate. The protein operates within glycan biosynthesis; glycogen biosynthesis. In terms of biological role, involved in the biosynthesis of ADP-glucose, a building block required for the elongation reactions to produce glycogen. Catalyzes the reaction between ATP and alpha-D-glucose 1-phosphate (G1P) to produce pyrophosphate and ADP-Glc. The sequence is that of Glucose-1-phosphate adenylyltransferase from Novosphingobium aromaticivorans (strain ATCC 700278 / DSM 12444 / CCUG 56034 / CIP 105152 / NBRC 16084 / F199).